We begin with the raw amino-acid sequence, 54 residues long: Soricidin (54 aa).

3 disulfides stabilise this stretch: cysteine 2–cysteine 23, cysteine 6–cysteine 27, and cysteine 9–cysteine 41.

The protein belongs to the opioid neuropeptide precursor family. As to quaternary structure, member of a multiprotein complex. In terms of tissue distribution, salivary gland.

It is found in the secreted. Functionally, paralytic toxin that immobilizes a mealworm for 7 days. Inhibits the transient receptor potential cation channel subfamily V member 6 (TRPV6). The protein is Soricidin of Blarina brevicauda (Northern short-tailed shrew).